The sequence spans 213 residues: 3-isopropylmalate dehydratase small subunit (213 aa).

The protein belongs to the LeuD family. LeuD type 1 subfamily. Heterodimer of LeuC and LeuD.

The enzyme catalyses (2R,3S)-3-isopropylmalate = (2S)-2-isopropylmalate. It participates in amino-acid biosynthesis; L-leucine biosynthesis; L-leucine from 3-methyl-2-oxobutanoate: step 2/4. In terms of biological role, catalyzes the isomerization between 2-isopropylmalate and 3-isopropylmalate, via the formation of 2-isopropylmaleate. This chain is 3-isopropylmalate dehydratase small subunit, found in Neisseria meningitidis serogroup B (strain ATCC BAA-335 / MC58).